A 203-amino-acid polypeptide reads, in one-letter code: ATP-dependent Clp protease proteolytic subunit 2 (203 aa).

Catalysis depends on Ser100, which acts as the Nucleophile. His125 is a catalytic residue.

The protein belongs to the peptidase S14 family. In terms of assembly, fourteen ClpP subunits assemble into 2 heptameric rings which stack back to back to give a disk-like structure with a central cavity, resembling the structure of eukaryotic proteasomes.

The protein localises to the cytoplasm. It catalyses the reaction Hydrolysis of proteins to small peptides in the presence of ATP and magnesium. alpha-casein is the usual test substrate. In the absence of ATP, only oligopeptides shorter than five residues are hydrolyzed (such as succinyl-Leu-Tyr-|-NHMec, and Leu-Tyr-Leu-|-Tyr-Trp, in which cleavage of the -Tyr-|-Leu- and -Tyr-|-Trp bonds also occurs).. Its function is as follows. Cleaves peptides in various proteins in a process that requires ATP hydrolysis. Has a chymotrypsin-like activity. Plays a major role in the degradation of misfolded proteins. This Nocardia farcinica (strain IFM 10152) protein is ATP-dependent Clp protease proteolytic subunit 2.